A 315-amino-acid chain; its full sequence is Taste receptor type 2 member 3 (315 aa).

The Extracellular portion of the chain corresponds to 1–5 (MGLTE). A helical transmembrane segment spans residues 6-26 (GVFLILSGTQFTLGILVNCFI). Over 27 to 41 (ELVNGSSWFKTKRMS) the chain is Cytoplasmic. Residues 42–62 (LSDFIITTLALLRIILLCIIL) form a helical membrane-spanning segment. Topologically, residues 63–93 (TDSFLIEFSPNTHDSGIIMQIIDVSWTFTNH) are extracellular. Residues 94–114 (LSIWLATCLGVLYCLKIASFS) traverse the membrane as a helical segment. Over 115 to 127 (HPTFLWLKWRVSR) the chain is Cytoplasmic. A helical transmembrane segment spans residues 128 to 148 (VMVWMLLGALLLSCGSTASLI). Residues 149-185 (NEFKLYSVFRGIEATRNVTEHFRKKRSEYYLIHVLGT) lie on the Extracellular side of the membrane. N-linked (GlcNAc...) asparagine glycosylation occurs at Asn-165. The helical transmembrane segment at 186–206 (LWYLPPLIVSLASYSLLIFSL) threads the bilayer. At 207-233 (GRHTRQMLQNGTSSRDPTTEAHKRAIR) the chain is on the cytoplasmic side. The helical transmembrane segment at 234-254 (IILSFFFLFLLYFLAFLIASF) threads the bilayer. Topologically, residues 255 to 265 (GNFLPKTKMAK) are extracellular. A helical membrane pass occupies residues 266–286 (MIGEVMTMFYPAGHSFILILG). The Cytoplasmic portion of the chain corresponds to 287–315 (NSKLKQTFVVMLRCESGHLKPGSKGPIFS).

This sequence belongs to the G-protein coupled receptor T2R family.

It localises to the membrane. Functionally, gustducin-coupled receptor implicated in the perception of bitter compounds in the oral cavity and the gastrointestinal tract. Signals through PLCB2 and the calcium-regulated cation channel TRPM5. This Gorilla gorilla gorilla (Western lowland gorilla) protein is Taste receptor type 2 member 3 (TAS2R3).